The primary structure comprises 134 residues: Psoriasis susceptibility 1 candidate gene 2 protein homolog (134 aa).

Positions methionine 1 to glycine 21 are cleaved as a signal peptide. The disordered stretch occupies residues glycine 18–arginine 134. Pro residues-rich tracts occupy residues proline 39 to serine 67 and proline 81 to proline 98. A compositionally biased stretch (acidic residues) spans glutamate 122–arginine 134.

It localises to the secreted. The polypeptide is Psoriasis susceptibility 1 candidate gene 2 protein homolog (Psors1c2) (Mus musculus (Mouse)).